The following is a 347-amino-acid chain: 4-hydroxy-2-oxovalerate aldolase (347 aa).

A Pyruvate carboxyltransferase domain is found at 11-262 (PVVVDTTLRD…NPGLDVFKLL (252 aa)). Residue 19-20 (RD) participates in substrate binding. Residue D20 coordinates Mn(2+). The Proton acceptor role is filled by H23. Substrate contacts are provided by S173 and H201. Mn(2+) contacts are provided by H201 and H203. Substrate is bound at residue Y292.

The protein belongs to the 4-hydroxy-2-oxovalerate aldolase family. Homodimer. Can also form a heterotetramer composed of two aldolase (TTHB246) and two dehydrogenase (TTHB247) subunits. Upon complex formation, the aldolase shows a 5-fold increase in substrate affinity, while the dehydrogenase shows a 3-fold decrease; the kcat values of each enzyme are reduced by 2-fold when they are in a complex. Co(2+) is required as a cofactor. Requires Ni(2+) as cofactor. Mn(2+) serves as cofactor.

The catalysed reaction is (S)-4-hydroxy-2-oxopentanoate = acetaldehyde + pyruvate. It carries out the reaction (S)-4-hydroxy-2-oxohexanoate = propanal + pyruvate. Appears to be allosterically activated by NADH. Catalyzes the retro-aldol cleavage of both 4-hydroxy-2-oxopentanoate (HOPA) and 4-hydroxy-2-oxohexanoate (HOHA) to pyruvate and acetaldehyde or propanaldehyde, respectively. The aldehydes produced by this reaction are directly channeled to the dehydrogenase TTHB247, ensuring that these toxic aldehydes are sequestered from cellular components. Is involved in the meta-cleavage pathway for the degradation of aromatic compounds. Appears to be stereospecific since it can cleave (4S)-4-hydroxy-2-oxopentanoate but not the (4R) isomer. Is not able to catalyze the aldol addition of 2-oxobutyrate with acetaldehyde; this indicates that the enzyme is specific for pyruvate as the carbonyl donor. This chain is 4-hydroxy-2-oxovalerate aldolase, found in Thermus thermophilus (strain ATCC 27634 / DSM 579 / HB8).